The sequence spans 65 residues: Small ribosomal subunit protein eS27 (65 aa).

4 residues coordinate Zn(2+): Cys-20, Cys-23, Cys-39, and Cys-42. Residues 20 to 42 (CIDCGNEQIVFSHPATPVRCLVC) form a C4-type zinc finger.

It belongs to the eukaryotic ribosomal protein eS27 family. Part of the 30S ribosomal subunit. Zn(2+) is required as a cofactor.

This chain is Small ribosomal subunit protein eS27, found in Thermococcus kodakarensis (strain ATCC BAA-918 / JCM 12380 / KOD1) (Pyrococcus kodakaraensis (strain KOD1)).